Here is a 270-residue protein sequence, read N- to C-terminus: tRNA pseudouridine synthase A (270 aa).

D60 (nucleophile) is an active-site residue. Residue Y118 coordinates substrate.

Belongs to the tRNA pseudouridine synthase TruA family. As to quaternary structure, homodimer.

It carries out the reaction uridine(38/39/40) in tRNA = pseudouridine(38/39/40) in tRNA. Functionally, formation of pseudouridine at positions 38, 39 and 40 in the anticodon stem and loop of transfer RNAs. This Salmonella arizonae (strain ATCC BAA-731 / CDC346-86 / RSK2980) protein is tRNA pseudouridine synthase A.